The following is a 406-amino-acid chain: MYENISTMDDFEFENKWVLLRIDINSTVIDGKIEDDERIKRHLGTIKELMEHDARVAILAHQGRPGEDDFTTLEPHAEIMSEELDNFEYVPDVFGPTAKKKIRSLEPGEVILLENVRFYSEERINRDPEWHARRHLVRNLAPLFDIFVNDAFAAAHRSNASLVGFTRRLPSCVGRVMEREIEVLETMVRDEMEDGVFVIGGSKIEDAIKVIRRAIEMDNVRRVLLGGLVGNLFLWASGVDLGKPSRKFLDMKGYTGYLDEARELLEEGDDVILVPEDVALNRGGEREEVDVDELPADAPVFDIGTGTIERYRKEVESAGMVVANGPMGVYEEPGFEKGTYEVLNAIADSEAFSVIGGGHIIAAAKACGAYDSIDHVSTGGGAMLRMLAGERLPAIDAILTCPFSGC.

Substrate-binding positions include 23–25 (DIN), arginine 38, 61–64 (HQGR), arginine 117, and arginine 157. ATP contacts are provided by residues glutamate 331 and 357-360 (GGHI).

This sequence belongs to the phosphoglycerate kinase family. In terms of assembly, monomer.

Its subcellular location is the cytoplasm. It catalyses the reaction (2R)-3-phosphoglycerate + ATP = (2R)-3-phospho-glyceroyl phosphate + ADP. It functions in the pathway carbohydrate degradation; glycolysis; pyruvate from D-glyceraldehyde 3-phosphate: step 2/5. The sequence is that of Phosphoglycerate kinase from Methanopyrus kandleri (strain AV19 / DSM 6324 / JCM 9639 / NBRC 100938).